The chain runs to 256 residues: Protein FixA (256 aa).

It belongs to the ETF beta-subunit/FixA family. In terms of assembly, heterodimer of FixA and FixB.

The protein operates within amine and polyamine metabolism; carnitine metabolism. Its function is as follows. Required for anaerobic carnitine reduction. May bring reductant to CaiA. This is Protein FixA from Salmonella paratyphi B (strain ATCC BAA-1250 / SPB7).